Consider the following 427-residue polypeptide: MTWFIDRRLNGKNKSMVNRQRFLRRYKAQIKQSISEAINKRSVTDVDSGESVSIPTEDISEPMFHQGRGGLRHRVHPGNDHFVQNDRIERPQGGGGGSGSGQGQASQDGEGQDEFVFQISKDEYLDLLFEDLALPNLKQNQQRQLTEYKTHRAGYTANGVPANISVVRSLQNSLARRTAMTAGKRRELHALEENLAIISNSEPAQLLEEERLRKEIAELRAKIERVPFIDTFDLRYKNYEKRPDPSSQAVMFCLMDVSGSMDQSTKDMAKRFYILLYLFLSRTYKNVEVVYIRHHTQAKEVDEHEFFYSQETGGTIVSSALKLMDEVVKERYNPAQWNIYAAQASDGDNWADDSPLCHEILAKKILPVVRYYSYIEITRRAHQTLWREYEHLQSTFDNFAMQHIRDQDDIYPVFRELFHKQNATAKD.

The span at 79-90 (NDHFVQNDRIER) shows a compositional bias: basic and acidic residues. Residues 79 to 110 (NDHFVQNDRIERPQGGGGGSGSGQGQASQDGE) form a disordered region. The span at 92 to 102 (QGGGGGSGSGQ) shows a compositional bias: gly residues.

Belongs to the UPF0229 family.

The chain is UPF0229 protein YeaH from Escherichia coli O127:H6 (strain E2348/69 / EPEC).